The following is a 345-amino-acid chain: Phosphate acyltransferase (345 aa).

This sequence belongs to the PlsX family. Homodimer. Probably interacts with PlsY.

Its subcellular location is the cytoplasm. The catalysed reaction is a fatty acyl-[ACP] + phosphate = an acyl phosphate + holo-[ACP]. It participates in lipid metabolism; phospholipid metabolism. Functionally, catalyzes the reversible formation of acyl-phosphate (acyl-PO(4)) from acyl-[acyl-carrier-protein] (acyl-ACP). This enzyme utilizes acyl-ACP as fatty acyl donor, but not acyl-CoA. The chain is Phosphate acyltransferase from Proteus mirabilis (strain HI4320).